Reading from the N-terminus, the 587-residue chain is Ankyrin repeat and SOCS box protein 14 (587 aa).

11 ANK repeats span residues asparagine 81–tryptophan 110, asparagine 116–alanine 145, glutamate 149–leucine 178, asparagine 182–alanine 211, tyrosine 215–serine 244, aspartate 248–isoleucine 277, serine 281–isoleucine 310, serine 313–phenylalanine 342, glutamine 355–glutamine 384, aspartate 385–tyrosine 414, and cysteine 416–arginine 449. One can recognise an SOCS box domain in the interval tryptophan 521–aspartate 576.

It belongs to the ankyrin SOCS box (ASB) family. In terms of assembly, interacts with MAPRE2; this interaction promotes MAPRE2 degradation.

Its pathway is protein modification; protein ubiquitination. Its function is as follows. May be a substrate-recognition component of a SCF-like ECS (Elongin-Cullin-SOCS-box protein) E3 ubiquitin-protein ligase complex which mediates the ubiquitination and subsequent proteasomal degradation of target proteins. Plays a role in the inhibition of cardiomyocyte nuclear proliferation by mediating the ubiquitination and degradation of MAPRE2. The protein is Ankyrin repeat and SOCS box protein 14 (Asb14) of Mus musculus (Mouse).